Consider the following 290-residue polypeptide: MMRIMLFLATNLAVLIIASITLKLLGVDRFTGQNHGSLLIFCAVFGFAGSLVSLFISKWMAKMSTGTQIITQPRTRHEQWLLQTVEELSREAGIKMPEVGIFPAYESNAFATGWNKNDALVAVSQGLLERFSPDEVRAVLAHEIGHVANGDMVTLALIQGVVNTFVMFFARIFGSFVDKAIFKNEDGHGIGYFIATIFAELVLGILASIIVMWFSRKREFKADEAGARLAGTGAMIAALQRLRAEQGVPVQMPDSLTAFGINGGLKNGLAGLLMTHPPLEDRIEALRRLG.

The next 2 helical transmembrane spans lie at 4-24 (IMLF…TLKL) and 36-56 (GSLL…SLFI). Residue His142 coordinates Zn(2+). Glu143 is an active-site residue. His146 contacts Zn(2+). The next 2 membrane-spanning stretches (helical) occupy residues 150–170 (GDMV…MFFA) and 193–213 (FIAT…IVMW). Glu219 contributes to the Zn(2+) binding site.

This sequence belongs to the peptidase M48B family. The cofactor is Zn(2+).

The protein localises to the cell inner membrane. This is Protease HtpX from Ectopseudomonas mendocina (strain ymp) (Pseudomonas mendocina).